The sequence spans 218 residues: GTP cyclohydrolase 1 (218 aa).

Residues cysteine 109, histidine 112, and cysteine 180 each coordinate Zn(2+).

Belongs to the GTP cyclohydrolase I family. In terms of assembly, toroid-shaped homodecamer, composed of two pentamers of five dimers.

It carries out the reaction GTP + H2O = 7,8-dihydroneopterin 3'-triphosphate + formate + H(+). Its pathway is cofactor biosynthesis; 7,8-dihydroneopterin triphosphate biosynthesis; 7,8-dihydroneopterin triphosphate from GTP: step 1/1. The protein is GTP cyclohydrolase 1 of Histophilus somni (strain 129Pt) (Haemophilus somnus).